The chain runs to 141 residues: Cystatin (141 aa).

The N-terminal stretch at 1–26 (MVHSQLPVAGPLRLLCALLLLPSATM) is a signal peptide. Positions 29–129 (GGLSPRSVTD…CHFQVWSRPW (101 aa)) constitute a Cystatin domain. The Secondary area of contact signature appears at 73–77 (QVVSG). 2 disulfide bridges follow: Cys-91–Cys-107 and Cys-120–Cys-140.

It belongs to the cystatin family. In terms of tissue distribution, expressed at a low level by the venom gland (at protein level).

It localises to the secreted. Its function is as follows. Inhibits various C1 cysteine proteases including cathepsin L, papain and cathepsin B. This protein has no toxic activity and its function in the venom is unknown. It may play a role as a housekeeping or regulatory protein. The protein is Cystatin of Pseudechis australis (Mulga snake).